The sequence spans 985 residues: DNA ligase 4 (985 aa).

Disordered regions lie at residues 1 to 27 and 43 to 70; these read MDRLNNVGGETERELDEKYPNRPRNKH and LNGNKKRPTGPAAARKKLGPHGGQQTLS. A compositionally biased stretch (basic and acidic residues) spans 10-20; it reads ETERELDEKYP. Residues 46–61 show a composition bias toward basic residues; that stretch reads NKKRPTGPAAARKKLG. ATP-binding residues include glutamate 310, lysine 312, leucine 313, arginine 317, glutamate 379, phenylalanine 420, glutamate 480, lysine 485, lysine 502, and lysine 504. Lysine 312 functions as the N6-AMP-lysine intermediate in the catalytic mechanism. Glutamate 379 serves as a coordination point for Mg(2+). Mg(2+) is bound at residue glutamate 480. BRCT domains are found at residues 711-804 and 878-983; these read PSGH…PDLL and LRGW…RFAP.

This sequence belongs to the ATP-dependent DNA ligase family. The cofactor is Mg(2+).

The protein resides in the nucleus. The enzyme catalyses ATP + (deoxyribonucleotide)n-3'-hydroxyl + 5'-phospho-(deoxyribonucleotide)m = (deoxyribonucleotide)n+m + AMP + diphosphate.. Its function is as follows. DNA ligase involved in DNA non-homologous end joining (NHEJ); required for double-strand break (DSB) repair. This Coccidioides immitis (strain RS) (Valley fever fungus) protein is DNA ligase 4 (LIG4).